A 167-amino-acid chain; its full sequence is Epithelial membrane protein 2 (167 aa).

The chain crosses the membrane as a helical span at residues 1-21 (MLVLLAFIIVFHITSAALLLV). N-linked (GlcNAc...) asparagine glycosylation is found at Asn44, Asn47, and Asn52. 3 consecutive transmembrane segments (helical) span residues 67–87 (TMILSTILCCIAFLIFLLQLF), 95–115 (FVLTSIIQLMACLCVMIAASI), and 143–163 (FILAWVAFAFTFISGLMYLIL).

Belongs to the PMP-22/EMP/MP20 family. In terms of assembly, interacts with PTK2; regulates PTK2 activation and localization. Interacts with ITGB3; regulates the levels of the heterodimer ITGA5-ITGB3 integrin surface expression. Interacts with P2RX7 (via C-terminus). Interacts with ITGB1; the interaction may be direct or indirect and ITGB1 has a heterodimer form.

It is found in the golgi apparatus membrane. Its subcellular location is the cell membrane. The protein localises to the apical cell membrane. It localises to the membrane raft. The protein resides in the cytoplasm. It is found in the nucleus. Its subcellular location is the perinuclear region. Its function is as follows. Functions as a key regulator of cell membrane composition by regulating protein surface expression. Also, plays a role in regulation of processes including cell migration, cell proliferation, cell contraction and cell adhesion. Regulates transepithelial migration of neutrophils into the alveolar lumen, potentially via mediation of cell surface expression of adhesion markers and lipid raft formation. Negatively regulates caveolae formation by reducing CAV1 expression and CAV1 amount by increasing lysosomal degradation. Facilitates surface trafficking and the formation of lipid rafts bearing GPI-anchor proteins. Regulates surface expression of MHC1 and ICAM1 proteins increasing susceptibility to T-cell mediated cytotoxicity. Regulates the plasma membrane expression of the integrin heterodimers ITGA6-ITGB1, ITGA5-ITGB3 and ITGA5-ITGB1 resulting in modulation of cell-matrix adhesion. Also regulates many processes through PTK2. Regulates blood vessel endothelial cell migration and angiogenesis by regulating VEGF protein expression through PTK2 activation. Regulates cell migration and cell contraction through PTK2 and SRC activation. Regulates focal adhesion density, F-actin conformation and cell adhesion capacity through interaction with PTK2. Positively regulates cell proliferation. Plays a role during cell death and cell blebbing. Promotes angiogenesis and vasculogenesis through induction of VEGFA via a HIF1A-dependent pathway. Also plays a role in embryo implantation by regulating surface trafficking of integrin heterodimer ITGA5-ITGB3. Plays a role in placental angiogenesis and uterine natural killer cell regulation at the maternal-fetal placental interface, however not required in the maternal tissues for a viable pregnancy. Involved in the early stages of embryogenic development and cardiogenesis, potentially via regulation of epithelial-mesenchymal transition timing. May play a role in glomerular filtration. The protein is Epithelial membrane protein 2 (EMP2) of Bos taurus (Bovine).